An 835-amino-acid chain; its full sequence is Leucine--tRNA ligase (835 aa).

A 'HIGH' region motif is present at residues P36–H46. Residues K602–S606 carry the 'KMSKS' region motif. K605 provides a ligand contact to ATP.

Belongs to the class-I aminoacyl-tRNA synthetase family.

The protein localises to the cytoplasm. The catalysed reaction is tRNA(Leu) + L-leucine + ATP = L-leucyl-tRNA(Leu) + AMP + diphosphate. This Rickettsia massiliae (strain Mtu5) protein is Leucine--tRNA ligase.